Here is a 54-residue protein sequence, read N- to C-terminus: UPF0391 membrane protein pRL90066 (54 aa).

2 consecutive transmembrane segments (helical) span residues 5–25 (ALVF…GIAG) and 28–48 (ASIA…SLVM).

Belongs to the UPF0391 family.

The protein resides in the cell membrane. The polypeptide is UPF0391 membrane protein pRL90066 (Rhizobium johnstonii (strain DSM 114642 / LMG 32736 / 3841) (Rhizobium leguminosarum bv. viciae)).